We begin with the raw amino-acid sequence, 180 residues long: ATP-dependent protease subunit HslV (180 aa).

Threonine 7 is a catalytic residue. Na(+) contacts are provided by alanine 162, cysteine 165, and threonine 168.

This sequence belongs to the peptidase T1B family. HslV subfamily. In terms of assembly, a double ring-shaped homohexamer of HslV is capped on each side by a ring-shaped HslU homohexamer. The assembly of the HslU/HslV complex is dependent on binding of ATP.

It localises to the cytoplasm. The catalysed reaction is ATP-dependent cleavage of peptide bonds with broad specificity.. Allosterically activated by HslU binding. Functionally, protease subunit of a proteasome-like degradation complex believed to be a general protein degrading machinery. This is ATP-dependent protease subunit HslV from Dichelobacter nodosus (strain VCS1703A).